The following is a 702-amino-acid chain: Phosphatase and actin regulator 4 (702 aa).

Disordered regions lie at residues 1–37 (MEDPFEEADQPTTEPGMVLDSVEAGDTTPPTKRKSKF), 72–194 (RKPR…SSGG), and 222–363 (NLSV…PFPA). An RPEL 1 repeat occupies 63–88 (EVLERKISMRKPREELVKRGVLLEDP). Over residues 72 to 84 (RKPREELVKRGVL) the composition is skewed to basic and acidic residues. Positions 106 to 120 (GHTTPIGNARSSSPV) are enriched in polar residues. Phosphoserine is present on residues Ser-116, Ser-118, Ser-131, and Ser-147. A compositionally biased stretch (polar residues) spans 147–156 (STGSQPNSEA). A compositionally biased stretch (pro residues) spans 163–173 (VPKPPLLPPKR). Low complexity predominate over residues 233–250 (TLPAAPASTNTTATPSLT). Phosphoserine occurs at positions 270 and 291. Over residues 301 to 318 (PSTSVPTLESAAAITTKT) the composition is skewed to polar residues. Phosphoserine occurs at positions 342 and 344. Pro residues predominate over residues 342-362 (SPSPPLPTHIPPEPPRTPPFP). Phosphothreonine is present on Thr-358. A Phosphoserine modification is found at Ser-427. At Thr-432 the chain carries Phosphothreonine. A phosphoserine mark is found at Ser-443, Ser-453, and Ser-464. The interval 469–536 (IEMLKVPDDE…EEDEDESYQS (68 aa)) is disordered. Positions 484 to 497 (TCPSTFSEEMTPTS) are enriched in polar residues. The span at 508–518 (EEEEKESDSDS) shows a compositional bias: acidic residues. Residues Ser-514, Ser-516, Ser-557, and Ser-590 each carry the phosphoserine modification. 2 RPEL repeats span residues 583-608 (NTLIRRLSQRPTPEELEQRNILQPKN) and 621-646 (RRLTRKLSQRPTVAELLARKILRFNE). The tract at residues 592-615 (RPTPEELEQRNILQPKNEADRQAE) is disordered. Ser-628 carries the phosphoserine modification.

The protein belongs to the phosphatase and actin regulator family. Binds PPP1CA and actin.

It is found in the cytoplasm. The protein resides in the cell projection. The protein localises to the lamellipodium. Its function is as follows. Regulator of protein phosphatase 1 (PP1) required for neural tube and optic fissure closure, and enteric neural crest cell (ENCCs) migration during development. Acts as an activator of PP1 by interacting with PPP1CA and preventing phosphorylation of PPP1CA at 'Thr-320'. During neural tube closure, localizes to the ventral neural tube and activates PP1, leading to down-regulate cell proliferation within cranial neural tissue and the neural retina. Also acts as a regulator of migration of enteric neural crest cells (ENCCs) by activating PP1, leading to dephosphorylation and subsequent activation of cofilin (COF1 or COF2) and repression of the integrin signaling through the RHO/ROCK pathway. This chain is Phosphatase and actin regulator 4 (PHACTR4), found in Homo sapiens (Human).